The primary structure comprises 481 residues: Probable myosin light chain kinase DDB_G0284661 (481 aa).

Residues Tyr-13–Ile-269 form the Protein kinase domain. Residues Ile-19–Val-27 and Lys-43 each bind ATP. Asp-136 acts as the Proton acceptor in catalysis. Disordered stretches follow at residues Pro-285–Lys-315 and Ser-345–Glu-427. The segment covering Ser-379–Phe-421 has biased composition (low complexity).

The protein belongs to the protein kinase superfamily. CAMK Ser/Thr protein kinase family. CaMK subfamily.

The catalysed reaction is L-seryl-[myosin light chain] + ATP = O-phospho-L-seryl-[myosin light chain] + ADP + H(+). The enzyme catalyses L-threonyl-[myosin light chain] + ATP = O-phospho-L-threonyl-[myosin light chain] + ADP + H(+). With respect to regulation, does not have a calmodulin-binding domain. In terms of biological role, may phosphorylate a specific serine in the N-terminus of a myosin light chain. The chain is Probable myosin light chain kinase DDB_G0284661 from Dictyostelium discoideum (Social amoeba).